A 1669-amino-acid chain; its full sequence is Collagen alpha-1(IV) chain (1669 aa).

Positions methionine 1–alanine 27 are cleaved as a signal peptide. The propeptide at lysine 28 to lysine 172 is N-terminal propeptide (7S domain). Disordered regions lie at residues lysine 48–glutamate 459, glycine 504–glutamine 1382, and proline 1404–proline 1431. Asparagine 126 carries an N-linked (GlcNAc...) asparagine glycan. The triple-helical region stretch occupies residues glycine 173–proline 1440. Residues valine 196–proline 214 show a composition bias toward pro residues. 3-hydroxyproline is present on residues proline 204, proline 207, and proline 210. A compositionally biased stretch (low complexity) spans glutamine 234–glutamine 249. 2 stretches are compositionally biased toward basic and acidic residues: residues glutamate 250–lysine 263 and proline 289–lysine 298. 3 stretches are compositionally biased toward pro residues: residues proline 367–proline 376, proline 413–glutamine 424, and proline 436–proline 448. Residues phenylalanine 535 to aspartate 545 are compositionally biased toward basic and acidic residues. The segment covering glycine 586–glycine 595 has biased composition (gly residues). 2 positions are modified to 3-hydroxyproline: proline 587 and proline 602. 4-hydroxyproline is present on proline 603. 3-hydroxyproline is present on proline 605. At proline 606 the chain carries 4-hydroxyproline. The span at alanine 611–alanine 620 shows a compositional bias: low complexity. The span at glycine 621–glycine 630 shows a compositional bias: gly residues. 4-hydroxyproline occurs at positions 623, 626, 629, and 632. Residue proline 647 is modified to 3-hydroxyproline. A compositionally biased stretch (gly residues) spans glycine 797–glycine 817. 2 stretches are compositionally biased toward low complexity: residues glutamine 856–proline 875 and proline 977–proline 986. Over residues glycine 1011–glycine 1020 the composition is skewed to gly residues. The segment covering serine 1086–proline 1114 has biased composition (low complexity). 3-hydroxyproline is present on proline 1214. Residues proline 1247 to leucine 1258 show a composition bias toward pro residues. The span at glycine 1290–glycine 1299 shows a compositional bias: gly residues. Over residues proline 1368–glutamine 1382 the composition is skewed to low complexity. Proline 1424 is subject to 3-hydroxyproline. A Collagen IV NC1 domain is found at glycine 1445–threonine 1669. Disulfide bonds link cysteine 1460–cysteine 1551, cysteine 1493–cysteine 1548, cysteine 1505–cysteine 1511, cysteine 1570–cysteine 1665, cysteine 1604–cysteine 1662, and cysteine 1616–cysteine 1622. An S-Lysyl-methionine sulfilimine (Met-Lys) (interchain with K-1651) cross-link involves residue methionine 1533. Lysine 1651 is covalently cross-linked (S-Lysyl-methionine sulfilimine (Lys-Met) (interchain with M-1533)).

The protein belongs to the type IV collagen family. In terms of assembly, there are six type IV collagen isoforms, alpha 1(IV)-alpha 6(IV), each of which can form a triple helix structure with 2 other chains to generate type IV collagen network. Interacts with EFEMP2. Post-translationally, lysines at the third position of the tripeptide repeating unit (G-X-Y) are hydroxylated. The modified lysines can be O-glycosylated. In terms of processing, contains 4-hydroxyproline. Prolines at the third position of the tripeptide repeating unit (G-X-Y) are hydroxylated in some or all of the chains. Contains 3-hydroxyproline. This modification occurs on the first proline residue in the sequence motif Gly-Pro-Hyp, where Hyp is 4-hydroxyproline. Post-translationally, type IV collagens contain numerous cysteine residues which are involved in inter- and intramolecular disulfide bonding. 12 of these, located in the NC1 domain, are conserved in all known type IV collagens. In terms of processing, the trimeric structure of the NC1 domains is stabilized by covalent bonds (sulfilimine cross-links) between Lys and Met residues. These cross-links are important for the mechanical stability of the basement membrane. Sulfilimine cross-link is catalyzed by PXDN. Proteolytic processing produces the C-terminal NC1 peptide, arresten. In terms of tissue distribution, highly expressed in placenta.

It is found in the secreted. It localises to the extracellular space. The protein resides in the extracellular matrix. The protein localises to the basement membrane. Type IV collagen is the major structural component of glomerular basement membranes (GBM), forming a 'chicken-wire' meshwork together with laminins, proteoglycans and entactin/nidogen. In terms of biological role, arresten, comprising the C-terminal NC1 domain, inhibits angiogenesis and tumor formation. The C-terminal half is found to possess the anti-angiogenic activity. Specifically inhibits endothelial cell proliferation, migration and tube formation. This Homo sapiens (Human) protein is Collagen alpha-1(IV) chain.